We begin with the raw amino-acid sequence, 245 residues long: Aliphatic sulfonates import ATP-binding protein SsuB 2 (245 aa).

The region spanning 15–229 (VAVRGLSRAF…DVADPEFARI (215 aa)) is the ABC transporter domain. 47–54 (GASGCGKS) contributes to the ATP binding site.

Belongs to the ABC transporter superfamily. Aliphatic sulfonates importer (TC 3.A.1.17.2) family. The complex is composed of two ATP-binding proteins (SsuB), two transmembrane proteins (SsuC) and a solute-binding protein (SsuA).

Its subcellular location is the cell inner membrane. It carries out the reaction ATP + H2O + aliphatic sulfonate-[sulfonate-binding protein]Side 1 = ADP + phosphate + aliphatic sulfonateSide 2 + [sulfonate-binding protein]Side 1.. In terms of biological role, part of the ABC transporter complex SsuABC involved in aliphatic sulfonates import. Responsible for energy coupling to the transport system. This is Aliphatic sulfonates import ATP-binding protein SsuB 2 from Paracoccus denitrificans (strain Pd 1222).